The following is a 116-amino-acid chain: Acyl-CoA-binding protein homolog 3 (116 aa).

Residues 3–92 (LQEKFDAAVE…LNDMFDKIAE (90 aa)) enclose the ACB domain. An acyl-CoA is bound by residues 34–38 (YSLFK), lysine 60, and tyrosine 79.

This sequence belongs to the ACBP family.

In terms of biological role, binds medium- and long-chain acyl-CoA esters with very high affinity and may function as an intracellular carrier of acyl-CoA esters. This is Acyl-CoA-binding protein homolog 3 (acbp-3) from Caenorhabditis elegans.